A 57-amino-acid chain; its full sequence is Large ribosomal subunit protein bL32c (57 aa).

It belongs to the bacterial ribosomal protein bL32 family.

The protein resides in the plastid. The protein localises to the chloroplast. The chain is Large ribosomal subunit protein bL32c from Drimys granadensis.